The following is a 379-amino-acid chain: Galactose-1-phosphate uridylyltransferase (379 aa).

Residues 1–10 show a composition bias toward basic and acidic residues; it reads MSHSGADPEQ. A disordered region spans residues 1–20; that stretch reads MSHSGADPEQRQQASEADAM. Residue Cys75 participates in Zn(2+) binding. UDP-alpha-D-glucose contacts are provided by residues Ala81, 97 to 98, and Asn173; that span reads ND. A Zn(2+)-binding site is contributed by His184. Catalysis depends on His186, which acts as the Tele-UMP-histidine intermediate. Residue Gln188 participates in UDP-alpha-D-glucose binding. 4 residues coordinate Zn(2+): Glu202, His301, His319, and His321. UDP-alpha-D-glucose contacts are provided by residues 334-337 and 339-340; these read KFMV and YE.

It belongs to the galactose-1-phosphate uridylyltransferase type 1 family. As to quaternary structure, homodimer. Requires Zn(2+) as cofactor.

The catalysed reaction is alpha-D-galactose 1-phosphate + UDP-alpha-D-glucose = alpha-D-glucose 1-phosphate + UDP-alpha-D-galactose. It functions in the pathway carbohydrate metabolism; galactose metabolism. Functionally, plays an important role in galactose metabolism. In Mus musculus (Mouse), this protein is Galactose-1-phosphate uridylyltransferase (Galt).